A 122-amino-acid polypeptide reads, in one-letter code: Acidic phospholipase A2 CbIalpha (122 aa).

7 disulfide bridges follow: cysteine 26–cysteine 115, cysteine 28–cysteine 44, cysteine 43–cysteine 95, cysteine 49–cysteine 122, cysteine 50–cysteine 88, cysteine 57–cysteine 81, and cysteine 75–cysteine 86. Ca(2+)-binding residues include tyrosine 27, glycine 29, and glycine 31. Histidine 47 is an active-site residue. Ca(2+) is bound at residue aspartate 48. Residue aspartate 89 is part of the active site.

Belongs to the phospholipase A2 family. Group II subfamily. D49 sub-subfamily. Heterodimer of an acidic subunit (CbIalpha or CbIbeta) and a basic subunit (CbII). The acidic subunit is non-toxic, and increases the toxicity of the basic subunit. Ca(2+) is required as a cofactor. Expressed by the venom gland.

It localises to the secreted. It carries out the reaction a 1,2-diacyl-sn-glycero-3-phosphocholine + H2O = a 1-acyl-sn-glycero-3-phosphocholine + a fatty acid + H(+). Heterodimer: presynaptic neurotoxin. In terms of biological role, monomer: Snake venom phospholipase A2 (PLA2) is inactive towards micellar phosphatidylcholine but is weakly active towards non-micellar dithiolecithin. PLA2 catalyzes the calcium-dependent hydrolysis of the 2-acyl groups in 3-sn-phosphoglycerides. The protein is Acidic phospholipase A2 CbIalpha of Pseudocerastes fieldi (Field's horned viper).